The primary structure comprises 453 residues: Tubulin delta chain (453 aa).

143–149 contributes to the GTP binding site; that stretch reads AGGTGSG.

The protein belongs to the tubulin family. As to quaternary structure, found in a complex with TEDC1, TEDC2, TUBE1 and TUBD1.

It localises to the nucleus. The protein localises to the cytoplasm. It is found in the cytoskeleton. The protein resides in the microtubule organizing center. Its subcellular location is the centrosome. It localises to the centriole. The protein localises to the cell projection. It is found in the cilium. Its function is as follows. Acts as a positive regulator of hedgehog signaling and regulates ciliary function. The chain is Tubulin delta chain (TUBD1) from Macaca fascicularis (Crab-eating macaque).